The sequence spans 289 residues: 3-methyl-2-oxobutanoate hydroxymethyltransferase (289 aa).

Residues aspartate 58 and aspartate 99 each contribute to the Mg(2+) site. 3-methyl-2-oxobutanoate is bound by residues 58–59 (DS), aspartate 99, and lysine 128. Mg(2+) is bound at residue glutamate 130. The active-site Proton acceptor is the glutamate 197.

The protein belongs to the PanB family. Homodecamer; pentamer of dimers. Requires Mg(2+) as cofactor.

It is found in the cytoplasm. The enzyme catalyses 3-methyl-2-oxobutanoate + (6R)-5,10-methylene-5,6,7,8-tetrahydrofolate + H2O = 2-dehydropantoate + (6S)-5,6,7,8-tetrahydrofolate. Its pathway is cofactor biosynthesis; (R)-pantothenate biosynthesis; (R)-pantoate from 3-methyl-2-oxobutanoate: step 1/2. Functionally, catalyzes the reversible reaction in which hydroxymethyl group from 5,10-methylenetetrahydrofolate is transferred onto alpha-ketoisovalerate to form ketopantoate. This Leptothrix cholodnii (strain ATCC 51168 / LMG 8142 / SP-6) (Leptothrix discophora (strain SP-6)) protein is 3-methyl-2-oxobutanoate hydroxymethyltransferase.